The chain runs to 127 residues: Major sperm protein 38 (127 aa).

Position 2 is an N-acetylalanine (Ala2). The region spanning 9–126 (DIQTQPGTKI…RRKNLPIEYN (118 aa)) is the MSP domain.

Sperm.

It localises to the cell projection. The protein localises to the pseudopodium. Its subcellular location is the cytoplasm. It is found in the cytoskeleton. Central component in molecular interactions underlying sperm crawling. Forms an extensive filament system that extends from sperm villipoda, along the leading edge of the pseudopod. This Caenorhabditis elegans protein is Major sperm protein 38 (msp-38).